A 1131-amino-acid polypeptide reads, in one-letter code: Activity-dependent neuroprotector homeobox protein 2 (1131 aa).

Residues 73–96 form a C2H2-type 1 zinc finger; it reads YCCGLCKYSTKVLTSFKNHLHRYH. The segment at 106 to 128 adopts a C2H2-type 2; degenerate zinc-finger fold; it reads IPCPNCVFASQPKVVGRHFRMFH. Residues Lys118 and Lys146 each participate in a glycyl lysine isopeptide (Lys-Gly) (interchain with G-Cter in SUMO2) cross-link. Residues 155-178 form a C2H2-type 3; degenerate zinc finger; that stretch reads FTCLKCNFSNTLYYSMKKHVLVAH. The segment at 215–240 adopts a C2H2-type 4 zinc-finger fold; it reads YYCKKCNANASSQDALMYHILTSDIH. Residues 274–285 are compositionally biased toward low complexity; the sequence is LAAPANGSAPSA. The segment at 274 to 329 is disordered; it reads LAAPANGSAPSAPAQPPCFHLALPQNSPSPAAGQPVTVAQGAPGSLTHSPPAAGQS. The C2H2-type 5; degenerate zinc-finger motif lies at 694-716; it reads KTCPVCNELFPSNVYQVHMEVAH. Residues 747–768 form a C2H2-type 6; degenerate zinc finger; it reads VRCLSCKCLVSEEELIHHLLMH. 2 C2H2-type zinc fingers span residues 770 to 793 and 875 to 898; these read LGCLFCPCTFHDIKGLSEHSRNRH and STCPFCFGPFVTTEAYELHLKERH. A C2H2-type 9; degenerate zinc finger spans residues 913–937; it reads FKCIHCCGVYTGNMTLAAIAVHLVR. Residues Lys979 and Lys1018 each participate in a glycyl lysine isopeptide (Lys-Gly) (interchain with G-Cter in SUMO2) cross-link. Position 1024 is a phosphoserine (Ser1024). Residue Lys1032 forms a Glycyl lysine isopeptide (Lys-Gly) (interchain with G-Cter in SUMO1); alternate linkage. A Glycyl lysine isopeptide (Lys-Gly) (interchain with G-Cter in SUMO2); alternate cross-link involves residue Lys1032. Residues 1043–1102 constitute a DNA-binding region (homeobox); that stretch reads PKKYEGRSYEEKKQFLKDYFHKKPYPSKKEIELLSSLFWVWKIDVASFFGKRRYICMKAI.

The protein belongs to the krueppel C2H2-type zinc-finger protein family. May interact with SMARCA4/BRG1.

The protein localises to the nucleus. Its function is as follows. May be involved in transcriptional regulation. May play a role in neuronal function; perhaps involved in protection of brain tissues from oxidative stress. May be involved in erythroid differentiation. The chain is Activity-dependent neuroprotector homeobox protein 2 (ADNP2) from Homo sapiens (Human).